Reading from the N-terminus, the 32-residue chain is Periplasmic [NiFe] hydrogenase small subunit (32 aa).

Residues C17 and C20 each contribute to the [4Fe-4S] cluster site.

Belongs to the [NiFe]/[NiFeSe] hydrogenase small subunit family. As to quaternary structure, heterodimer of a large and a small subunit. [3Fe-4S] cluster is required as a cofactor. [4Fe-4S] cluster serves as cofactor.

The protein localises to the periplasm. The catalysed reaction is 2 Fe(III)-[cytochrome c3] + H2 = 2 Fe(II)-[cytochrome c3] + 2 H(+). In Desulfovibrio multispirans, this protein is Periplasmic [NiFe] hydrogenase small subunit (hydA).